The chain runs to 480 residues: MDSQVLPLILLIIVFAASSAHGHFPHRTNQDSDCPEASNGCWCHDSFAQCWKTYEVANIARKKDVIRKLELLSLQLEDVLKYIAQLPNLEAIKLGPEGDDHLFECSCDNVLELSGSVVSVVNANDVHVTGCLEHGWSRDIYTMNAFATRCRRRLILESGGAEMRHRRSAKDDDVNKRASPRKGSSPAGKKVQIMEQDAGKGDAHNEKEVVKDQKPTKELFDFFMGHRRKRRSIDDVIGEMRAERQRRYAQGAGGMQGGYGYPQAGGAQYGGQPVQGYMNQGPPMGQRPAAAGPAGGFGAPQGQPPVGQPIGEAAGGGEFLGEPGVGGESEFAEYSSSIGEGETINAEVMEKIKAVLGATKIDLPVDINDPYDLGLLLRHLRHHSNLLANIGDPEVRNQVLTAMQEEEEEEEQDAANGVRDNVLNNLNEGPGAGAVAGAAMAAGMPPYPGGAQGGMRVGGQPQNPMGGNAYNPMTGYRQQG.

An N-terminal signal peptide occupies residues 1-20; the sequence is MDSQVLPLILLIIVFAASSA. A propeptide spanning residues 21 to 247 is cleaved from the precursor; sequence HGHFPHRTNQ…GEMRAERQRR (227 aa). Residues 161-211 are disordered; the sequence is AEMRHRRSAKDDDVNKRASPRKGSSPAGKKVQIMEQDAGKGDAHNEKEVVK. The segment covering 197 to 211 has biased composition (basic and acidic residues); the sequence is DAGKGDAHNEKEVVK. The segment at 377–385 is fucose-binding domain; the sequence is LRHLRHHSN. The helical transmembrane segment at 431-451 threads the bilayer; the sequence is GAGAVAGAAMAAGMPPYPGGA. A disordered region spans residues 452 to 480; that stretch reads QGGMRVGGQPQNPMGGNAYNPMTGYRQQG.

Belongs to the bindin family.

Its subcellular location is the cytoplasmic vesicle. It localises to the secretory vesicle. The protein resides in the acrosome membrane. Its function is as follows. Species-specific sea urchin sperm protein required for adhesion of sperm to the egg surface during fertilization. Bindin coats the acrosomal process after it is externalized by the acrosome reaction. It binds to sulfated, fucose-containing polysaccharides on the vitelline layer receptor proteoglycans which cover the egg plasma membrane. The chain is Bindin from Arbacia punctulata (Punctuate sea urchin).